Consider the following 132-residue polypeptide: Large ribosomal subunit protein uL14 (132 aa).

Belongs to the universal ribosomal protein uL14 family. In terms of assembly, part of the 50S ribosomal subunit. Forms a cluster with proteins L3 and L24e, part of which may contact the 16S rRNA in 2 intersubunit bridges.

Its function is as follows. Binds to 23S rRNA. Forms part of two intersubunit bridges in the 70S ribosome. The chain is Large ribosomal subunit protein uL14 from Methanocella arvoryzae (strain DSM 22066 / NBRC 105507 / MRE50).